The primary structure comprises 156 residues: tRNA (cytidine(34)-2'-O)-methyltransferase (156 aa).

S-adenosyl-L-methionine is bound by residues Gly-100, Ile-122, and Ser-130.

This sequence belongs to the class IV-like SAM-binding methyltransferase superfamily. RNA methyltransferase TrmH family. TrmL subfamily. As to quaternary structure, homodimer.

It localises to the cytoplasm. It catalyses the reaction cytidine(34) in tRNA + S-adenosyl-L-methionine = 2'-O-methylcytidine(34) in tRNA + S-adenosyl-L-homocysteine + H(+). The enzyme catalyses 5-carboxymethylaminomethyluridine(34) in tRNA(Leu) + S-adenosyl-L-methionine = 5-carboxymethylaminomethyl-2'-O-methyluridine(34) in tRNA(Leu) + S-adenosyl-L-homocysteine + H(+). In terms of biological role, methylates the ribose at the nucleotide 34 wobble position in the two leucyl isoacceptors tRNA(Leu)(CmAA) and tRNA(Leu)(cmnm5UmAA). Catalyzes the methyl transfer from S-adenosyl-L-methionine to the 2'-OH of the wobble nucleotide. In Aeromonas hydrophila subsp. hydrophila (strain ATCC 7966 / DSM 30187 / BCRC 13018 / CCUG 14551 / JCM 1027 / KCTC 2358 / NCIMB 9240 / NCTC 8049), this protein is tRNA (cytidine(34)-2'-O)-methyltransferase.